Reading from the N-terminus, the 141-residue chain is HTH-type transcriptional repressor NsrR (141 aa).

The HTH rrf2-type domain maps to 2–129 (QLTSFTDYGL…DNYTLADLVE (128 aa)). The segment at residues 28-51 (ISEVTDVYGVSRNHMVKIINQLSR) is a DNA-binding region (H-T-H motif). Positions 91, 96, and 102 each coordinate [2Fe-2S] cluster.

[2Fe-2S] cluster serves as cofactor.

In terms of biological role, nitric oxide-sensitive repressor of genes involved in protecting the cell against nitrosative stress. May require iron for activity. The sequence is that of HTH-type transcriptional repressor NsrR from Escherichia coli O139:H28 (strain E24377A / ETEC).